Here is a 4194-residue protein sequence, read N- to C-terminus: Hybrid PKS-NRPS synthetase pydA (4194 aa).

The region spanning 14–450 is the Ketosynthase family 3 (KS3) domain; that stretch reads REPIAVVGSG…GTNAHAIVEN (437 aa). Residues Cys-187, His-326, and His-370 each act as for beta-ketoacyl synthase activity in the active site. In terms of domain architecture, Malonyl-CoA:ACP transacylase (MAT) spans 565–887; that stretch reads VFTGQGAQWA…QRGKDDVQAF (323 aa). An N-terminal hotdog fold region spans residues 953–1088; it reads HPLLGTRTTD…GRVIVITGEA (136 aa). The 305-residue stretch at 953–1257 folds into the PKS/mFAS DH domain; sequence HPLLGTRTTD…VVSFSEPTAE (305 aa). His-985 serves as the catalytic Proton acceptor; for dehydratase activity. The tract at residues 1103–1257 is C-terminal hotdog fold; the sequence is LVDIPEDRFY…VVSFSEPTAE (155 aa). Asp-1163 functions as the Proton donor; for dehydratase activity in the catalytic mechanism. Residues 1302-1596 are methyltransferase (cMeT) domain; that stretch reads YMRQLASLFP…FSGVDSTTHE (295 aa). Residues 2141–2314 form the Ketoreductase (KR) domain; the sequence is TYVFFGLTSD…AGSILHIGAV (174 aa). The Carrier 1 domain occupies 2421–2505; the sequence is TTAEEALEIV…ELVEFAVENM (85 aa). Ser-2465 is modified (O-(pantetheine 4'-phosphoryl)serine). The segment at 2512–2583 is disordered; that stretch reads NMSDSLNAVP…ERDSSTASLE (72 aa). A compositionally biased stretch (low complexity) spans 2526 to 2547; it reads APVIPASPPSGSVSSAPSSDPP. The span at 2550 to 2565 shows a compositional bias: polar residues; the sequence is TAETSQHLSESSSKTS. Positions 2566-2577 are enriched in basic and acidic residues; it reads QPDEKQSEERDS. A condensation region spans residues 2591–3023; the sequence is EKVLPVSPGQ…QILKDVSLFT (433 aa). Residues 3056-3467 are adenylation; the sequence is ANPPQEIALR…RIEGDTQIKL (412 aa). One can recognise a Carrier 2 domain in the interval 3580–3660; that stretch reads TQLTEAESEL…AMAAVIQDLS (81 aa). Position 3620 is an O-(pantetheine 4'-phosphoryl)serine (Ser-3620). The Thioester reductase (TE) domain maps to 3701–3920; sequence ITGATGFLGK…VDLISVERAA (220 aa). 2 disordered regions span residues 4031 to 4110 and 4163 to 4194; these read RRDK…DEQI and KGEY…EPDD. Positions 4057–4072 are enriched in basic and acidic residues; the sequence is RGRDVSPRHPALDHPD. Residues 4174–4183 show a composition bias toward acidic residues; that stretch reads EEAEEAEWQC. The span at 4184–4194 shows a compositional bias: basic and acidic residues; sequence DEGHGDGEPDD.

In the C-terminal section; belongs to the NRP synthetase family. Requires pantetheine 4'-phosphate as cofactor.

It functions in the pathway mycotoxin biosynthesis. In terms of biological role, hybrid PKS-NRPS synthetase; part of the gene cluster that mediates the biosynthesis of pyrrocidines, fungal natural products containing a macrocyclic para-cyclophane connected to a decahydrofluorene ring system that show potent antibiotic activities toward Gram-negative bacteria. Within the pathway, the PKS-NRPS pydA, with the help of the trans-enoyl reductase pydC, synthesize the polyketide-tyrosyl acyl thioester product which can be reductively off-loaded by the terminal reductase (R) domain in pydA. The PKS module of pydA acts in combination with the trans-acting enoyl reductase pydC to produce a methylated polyketide attached to the ACP domain. In parallel, the adenylation (A) domain of the NRPS module activated L-tyrosine, which is then transferred to the ACP domain. The condensation (C) domain subsequently link this group to the polyketide chain, forming an enzyme-bound amide. The alpha/beta hydrolase pydG is then required to catalyze the subsequent Knoevenagel condensation that affords the 3-pyrrolin-2-one ring, whereas the four proteins pydB, pydE, pydX and pydZ then function synergistically to form the cyclophane. PydB and the membrane-bound pydX and pydZ are lipid-binding proteins that can sequester and mold the pdyG product into the inverse S-shape. Binding of the medium chain reductase pydE to the complex would trigger the cascade oxidative cyclization. PydY is involved in the Diels-Alder cycloaddition that forms the decahydrofluorene core. Additional non-enzymatic hydroxylation yields pyrrocidine A2 which can be further reduced into pyrrocidine B by an endogenous reductase. The sequence is that of Hybrid PKS-NRPS synthetase pydA from Acremonium sp.